Consider the following 103-residue polypeptide: Large ribosomal subunit protein bL21 (103 aa).

This sequence belongs to the bacterial ribosomal protein bL21 family. In terms of assembly, part of the 50S ribosomal subunit. Contacts protein L20.

Its function is as follows. This protein binds to 23S rRNA in the presence of protein L20. The polypeptide is Large ribosomal subunit protein bL21 (Clostridium beijerinckii (strain ATCC 51743 / NCIMB 8052) (Clostridium acetobutylicum)).